The following is a 546-amino-acid chain: 2-isopropylmalate synthase (546 aa).

In terms of domain architecture, Pyruvate carboxyltransferase spans 8–271 (ILIFDTTLRD…NSFFKRNPDS (264 aa)). Mn(2+)-binding residues include Asp17, His208, His210, and Asn244. Residues 408–546 (QLSLVQVSCG…TNTFLSNNAN (139 aa)) form a regulatory domain region.

The protein belongs to the alpha-IPM synthase/homocitrate synthase family. LeuA type 1 subfamily. As to quaternary structure, homodimer. Mn(2+) is required as a cofactor.

Its subcellular location is the cytoplasm. It catalyses the reaction 3-methyl-2-oxobutanoate + acetyl-CoA + H2O = (2S)-2-isopropylmalate + CoA + H(+). It functions in the pathway amino-acid biosynthesis; L-leucine biosynthesis; L-leucine from 3-methyl-2-oxobutanoate: step 1/4. Catalyzes the condensation of the acetyl group of acetyl-CoA with 3-methyl-2-oxobutanoate (2-ketoisovalerate) to form 3-carboxy-3-hydroxy-4-methylpentanoate (2-isopropylmalate). This chain is 2-isopropylmalate synthase, found in Prochlorococcus marinus (strain AS9601).